The sequence spans 281 residues: 2-dehydro-3-deoxyphosphooctonate aldolase (281 aa).

The protein belongs to the KdsA family.

The protein resides in the cytoplasm. The catalysed reaction is D-arabinose 5-phosphate + phosphoenolpyruvate + H2O = 3-deoxy-alpha-D-manno-2-octulosonate-8-phosphate + phosphate. It participates in carbohydrate biosynthesis; 3-deoxy-D-manno-octulosonate biosynthesis; 3-deoxy-D-manno-octulosonate from D-ribulose 5-phosphate: step 2/3. The protein operates within bacterial outer membrane biogenesis; lipopolysaccharide biosynthesis. The sequence is that of 2-dehydro-3-deoxyphosphooctonate aldolase from Pseudomonas fluorescens (strain Pf0-1).